Here is a 269-residue protein sequence, read N- to C-terminus: Expansin-B11 (269 aa).

Positions 1 to 30 (MTVVSIMWSLVQVQVLVAVALAFLVGGAWC) are cleaved as a signal peptide. Residue Asn-40 is glycosylated (N-linked (GlcNAc...) asparagine). In terms of domain architecture, Expansin-like EG45 spans 69–175 (GGGCGYKDVN…RRVKCKYGSK (107 aa)). Intrachain disulfides connect Cys-72-Cys-100, Cys-103-Cys-170, and Cys-108-Cys-114. In terms of domain architecture, Expansin-like CBD spans 187–268 (NYLALLVKYV…GWKPNTAYTA (82 aa)).

This sequence belongs to the expansin family. Expansin B subfamily. In terms of tissue distribution, expressed in pollen.

Its subcellular location is the secreted. It is found in the cell wall. The protein resides in the membrane. Functionally, may aid fertilization by loosening the cell wall of the stigma and style, thereby facilitating penetration of the pollen tube. Acts selectively on grass cell walls, which are relatively poor in pectins and xyloglucans and rich in glucuronoarabinoxylans and (1-3),(1-4)-beta-D-glucans, when compared with cell walls of other angiosperms, including other monocots. The polypeptide is Expansin-B11 (EXPB11) (Zea mays (Maize)).